A 100-amino-acid chain; its full sequence is MQLTPHEQERLLIHVAADVAEKRRARGLKLNHPEAVALITSHILEGARDGRTVAELMSSGRKLLTRDDVMEGIPEMIHDVQVEATFPDGTKLVTVHDPIV.

This sequence belongs to the urease gamma subunit family. Heterotrimer of UreA (gamma), UreB (beta) and UreC (alpha) subunits. Three heterotrimers associate to form the active enzyme.

Its subcellular location is the cytoplasm. It catalyses the reaction urea + 2 H2O + H(+) = hydrogencarbonate + 2 NH4(+). Its pathway is nitrogen metabolism; urea degradation; CO(2) and NH(3) from urea (urease route): step 1/1. This Streptomyces avermitilis (strain ATCC 31267 / DSM 46492 / JCM 5070 / NBRC 14893 / NCIMB 12804 / NRRL 8165 / MA-4680) protein is Urease subunit gamma.